The chain runs to 381 residues: Acetyl-CoA:oxalate CoA-transferase (381 aa).

The active site involves histidine 233.

The protein belongs to the CoA-transferase III family. In terms of assembly, homodimer.

It carries out the reaction oxalate + acetyl-CoA = oxalyl-CoA + acetate. Involved in the catabolism of oxalate and in the adapatation to low pH. ACOCT serves to prime the oxalate-induced acid tolerance response (ATR) cycle by producing substrate for oxalyl-CoA decarboxylase (OXC) and formyl-coenzyme A transferase (FCOCT). Catalyzes the reversible conversion of acetyl-CoA and oxalate to oxalyl-CoA and acetate. It can also use formyl-CoA and oxalate to produce oxalyl-CoA and formate with significantly reduced specific activity. This is Acetyl-CoA:oxalate CoA-transferase (yfdE) from Escherichia coli (strain K12).